A 300-amino-acid polypeptide reads, in one-letter code: Cation-efflux pump FieF (300 aa).

4 helical membrane-spanning segments follow: residues 11 to 31 (LAAVSATAVALVLFVMKVFAW), 40 to 60 (LASLVDSLVDIAASLVNLLVV), 81 to 101 (LAALAQSMFISGSALFLILTG), and 114 to 134 (PEVGMWVTLIALVATLLLVSF). Zn(2+) is bound by residues D45 and D49. Zn(2+) is bound by residues H153 and D157. 2 helical membrane passes run 156–176 (SDLLMNGAILVALALSWKGIT) and 182–202 (FALGIGVYILYSALRMGYDAV).

This sequence belongs to the cation diffusion facilitator (CDF) transporter (TC 2.A.4) family. FieF subfamily. In terms of assembly, homodimer.

It localises to the cell inner membrane. It catalyses the reaction Zn(2+)(in) + H(+)(out) = Zn(2+)(out) + H(+)(in). The catalysed reaction is Cd(2+)(in) + H(+)(out) = Cd(2+)(out) + H(+)(in). The enzyme catalyses Fe(2+)(in) + H(+)(out) = Fe(2+)(out) + H(+)(in). In terms of biological role, divalent metal cation transporter which exports Zn(2+), Cd(2+) and possibly Fe(2+). May be involved in zinc and iron detoxification by efflux. The chain is Cation-efflux pump FieF from Pectobacterium atrosepticum (strain SCRI 1043 / ATCC BAA-672) (Erwinia carotovora subsp. atroseptica).